The chain runs to 207 residues: Large ribosomal subunit protein uL4 (207 aa).

Residues 48 to 85 form a disordered region; that stretch reads THKVKNRSEVRGGGRKPWRQKGTGRARQGSIRSPQWRG. A compositionally biased stretch (basic residues) spans 60-71; the sequence is GGRKPWRQKGTG.

This sequence belongs to the universal ribosomal protein uL4 family. Part of the 50S ribosomal subunit.

Its function is as follows. One of the primary rRNA binding proteins, this protein initially binds near the 5'-end of the 23S rRNA. It is important during the early stages of 50S assembly. It makes multiple contacts with different domains of the 23S rRNA in the assembled 50S subunit and ribosome. Functionally, forms part of the polypeptide exit tunnel. In Bacillus subtilis (strain 168), this protein is Large ribosomal subunit protein uL4.